A 286-amino-acid polypeptide reads, in one-letter code: Homeobox-leucine zipper protein ATHB-20 (286 aa).

The segment at residues 84–143 (LGEKKKRLQLEQVKALEKSFELGNKLEPERKIQLAKALGMQPRQIAIWFQNRRARWKTRQ) is a DNA-binding region (homeobox). Residues 144 to 179 (LERDYDSLKKQFESLKSDNASLLAYNKKLLAEVMAL) form a leucine-zipper region.

The protein belongs to the HD-ZIP homeobox family. Class I subfamily. In terms of tissue distribution, widely expressed.

The protein localises to the nucleus. Its function is as follows. Probable transcription factor. The protein is Homeobox-leucine zipper protein ATHB-20 (ATHB-20) of Arabidopsis thaliana (Mouse-ear cress).